Consider the following 525-residue polypeptide: Putative ribose/galactose/methyl galactoside import ATP-binding protein (525 aa).

The tract at residues 1–20 is disordered; it reads MSGSATASPPAKPDLPSSDG. 2 consecutive ABC transporter domains span residues 33–269 and 279–523; these read LEIS…VGRE and KPAG…SGHR. Residue 65–72 participates in ATP binding; the sequence is GENGAGKS.

This sequence belongs to the ABC transporter superfamily. Carbohydrate importer 2 (CUT2) (TC 3.A.1.2) family.

The protein resides in the cell inner membrane. It carries out the reaction D-ribose(out) + ATP + H2O = D-ribose(in) + ADP + phosphate + H(+). It catalyses the reaction D-galactose(out) + ATP + H2O = D-galactose(in) + ADP + phosphate + H(+). Functionally, part of an ABC transporter complex involved in carbohydrate import. Could be involved in ribose, galactose and/or methyl galactoside import. Responsible for energy coupling to the transport system. This chain is Putative ribose/galactose/methyl galactoside import ATP-binding protein, found in Pseudomonas syringae pv. tomato (strain ATCC BAA-871 / DC3000).